The following is a 540-amino-acid chain: uncharacterized protein (540 aa).

The transit peptide at 1 to 58 (MAVSAFRGTRLPLFHHSQFPVARTVSGTSKKMIGARNFKGFVLTAQYSQTQDLFTSRL) directs the protein to the chloroplast. Residues 195 to 533 (YVDPTPIASA…ISIASNKRTN (339 aa)) enclose the Protein kinase domain. ATP contacts are provided by residues 201–209 (IASASIAQV) and Lys-224. Asp-362 serves as the catalytic Proton acceptor.

Belongs to the protein kinase superfamily. ADCK protein kinase family.

The protein localises to the plastid. Its subcellular location is the chloroplast. The protein resides in the plastoglobule. This is an uncharacterized protein from Arabidopsis thaliana (Mouse-ear cress).